Reading from the N-terminus, the 424-residue chain is Histidine--tRNA ligase (424 aa).

Belongs to the class-II aminoacyl-tRNA synthetase family. In terms of assembly, homodimer.

The protein localises to the cytoplasm. The catalysed reaction is tRNA(His) + L-histidine + ATP = L-histidyl-tRNA(His) + AMP + diphosphate + H(+). The polypeptide is Histidine--tRNA ligase (Bacillus licheniformis (strain ATCC 14580 / DSM 13 / JCM 2505 / CCUG 7422 / NBRC 12200 / NCIMB 9375 / NCTC 10341 / NRRL NRS-1264 / Gibson 46)).